Reading from the N-terminus, the 631-residue chain is Probable potassium transport system protein Kup 1 (631 aa).

Transmembrane regions (helical) follow at residues 17–37, 55–75, 101–121, 140–160, 166–186, 217–237, 249–269, 277–297, 338–358, 370–390, 395–415, and 420–440; these read LALGALGVVFGDIGTSPLYAL, LSLIFWSLIIVVSFKYLMIIF, PLFYIVAIFGAGLLLGDGMLT, LYPYVLPIASVILVLLFSLQA, IGYLFGPLILIWFITIAILGI, FLLGGIFLVVTGGEALFADIG, FFIALPCLLLNYFGQGANLIV, PFFMIAPPWFYLPLIIIATVA, IYVPQINFILFIGTMAFCLAF, IAVNLEMLLVDAMVAYAAVSI, TFNVIFLFGLFLLIDLAFLGA, and FITGGWVPIVLAFVIAFIMYS.

Belongs to the HAK/KUP transporter (TC 2.A.72) family.

The protein resides in the cell inner membrane. The enzyme catalyses K(+)(in) + H(+)(in) = K(+)(out) + H(+)(out). Its function is as follows. Transport of potassium into the cell. Likely operates as a K(+):H(+) symporter. This Legionella pneumophila (strain Corby) protein is Probable potassium transport system protein Kup 1.